A 1586-amino-acid chain; its full sequence is Pentafunctional AROM polypeptide (1586 aa).

The 3-dehydroquinate synthase stretch occupies residues 1 to 384; that stretch reads MSEPTKISIL…HEPKASVVSN (384 aa). NAD(+)-binding positions include 44–46, 81–84, 114–116, and Asp119; these read DTN, ESSK, and GGV. Position 130 (Arg130) interacts with 7-phospho-2-dehydro-3-deoxy-D-arabino-heptonate. 139 to 140 serves as a coordination point for NAD(+); that stretch reads TT. Residues Asp146 and Lys152 each coordinate 7-phospho-2-dehydro-3-deoxy-D-arabino-heptonate. Lys161 contacts NAD(+). Position 162 (Asn162) interacts with 7-phospho-2-dehydro-3-deoxy-D-arabino-heptonate. NAD(+) contacts are provided by residues 179–182 and Asn190; that span reads FLET. Glu194 contributes to the Zn(2+) binding site. 7-phospho-2-dehydro-3-deoxy-D-arabino-heptonate-binding positions include 194 to 197 and Lys250; that span reads EVIK. Residue Glu260 is the Proton acceptor; for 3-dehydroquinate synthase activity of the active site. Residues 264–268 and His271 each bind 7-phospho-2-dehydro-3-deoxy-D-arabino-heptonate; that span reads RNLLN. Residue His271 coordinates Zn(2+). The Proton acceptor; for 3-dehydroquinate synthase activity role is filled by His275. 7-phospho-2-dehydro-3-deoxy-D-arabino-heptonate-binding residues include His287 and Lys356. His287 serves as a coordination point for Zn(2+). The tract at residues 397 to 842 is EPSP synthase; sequence VHPGVPKSLN…WDALKQMFSV (446 aa). Cys824 serves as the catalytic For EPSP synthase activity. The segment at 864-1056 is shikimate kinase; sequence SASVFIIGMR…KKKKHSFFVS (193 aa). 871 to 878 contributes to the ATP binding site; sequence GMRGAGKT. Residues 1057 to 1277 are 3-dehydroquinase; it reads LTLPDVEPSG…AAPGQLSAAE (221 aa). His1180 serves as the catalytic Proton acceptor; for 3-dehydroquinate dehydratase activity. Lys1208 functions as the Schiff-base intermediate with substrate; for 3-dehydroquinate dehydratase activity in the catalytic mechanism. Residues 1290–1586 are shikimate dehydrogenase; that stretch reads AQKFAIFGSP…SKHLDYFLSF (297 aa).

In the N-terminal section; belongs to the sugar phosphate cyclases superfamily. Dehydroquinate synthase family. This sequence in the 2nd section; belongs to the EPSP synthase family. It in the 3rd section; belongs to the shikimate kinase family. The protein in the 4th section; belongs to the type-I 3-dehydroquinase family. In the C-terminal section; belongs to the shikimate dehydrogenase family. Homodimer. Requires Zn(2+) as cofactor.

The protein localises to the cytoplasm. It carries out the reaction 7-phospho-2-dehydro-3-deoxy-D-arabino-heptonate = 3-dehydroquinate + phosphate. The catalysed reaction is 3-dehydroquinate = 3-dehydroshikimate + H2O. The enzyme catalyses shikimate + NADP(+) = 3-dehydroshikimate + NADPH + H(+). It catalyses the reaction shikimate + ATP = 3-phosphoshikimate + ADP + H(+). It carries out the reaction 3-phosphoshikimate + phosphoenolpyruvate = 5-O-(1-carboxyvinyl)-3-phosphoshikimate + phosphate. It participates in metabolic intermediate biosynthesis; chorismate biosynthesis; chorismate from D-erythrose 4-phosphate and phosphoenolpyruvate: step 2/7. It functions in the pathway metabolic intermediate biosynthesis; chorismate biosynthesis; chorismate from D-erythrose 4-phosphate and phosphoenolpyruvate: step 3/7. The protein operates within metabolic intermediate biosynthesis; chorismate biosynthesis; chorismate from D-erythrose 4-phosphate and phosphoenolpyruvate: step 4/7. Its pathway is metabolic intermediate biosynthesis; chorismate biosynthesis; chorismate from D-erythrose 4-phosphate and phosphoenolpyruvate: step 5/7. It participates in metabolic intermediate biosynthesis; chorismate biosynthesis; chorismate from D-erythrose 4-phosphate and phosphoenolpyruvate: step 6/7. Its function is as follows. The AROM polypeptide catalyzes 5 consecutive enzymatic reactions in prechorismate polyaromatic amino acid biosynthesis. The sequence is that of Pentafunctional AROM polypeptide from Penicillium rubens (strain ATCC 28089 / DSM 1075 / NRRL 1951 / Wisconsin 54-1255) (Penicillium chrysogenum).